The sequence spans 307 residues: Ribonuclease Z (307 aa).

Zn(2+) contacts are provided by His61, His63, Asp65, His66, His138, Asp208, and His264. Asp65 functions as the Proton acceptor in the catalytic mechanism.

It belongs to the RNase Z family. In terms of assembly, homodimer. The cofactor is Zn(2+).

The catalysed reaction is Endonucleolytic cleavage of RNA, removing extra 3' nucleotides from tRNA precursor, generating 3' termini of tRNAs. A 3'-hydroxy group is left at the tRNA terminus and a 5'-phosphoryl group is left at the trailer molecule.. Its function is as follows. Zinc phosphodiesterase, which displays some tRNA 3'-processing endonuclease activity. Probably involved in tRNA maturation, by removing a 3'-trailer from precursor tRNA. The sequence is that of Ribonuclease Z from Pyrococcus horikoshii (strain ATCC 700860 / DSM 12428 / JCM 9974 / NBRC 100139 / OT-3).